Here is a 277-residue protein sequence, read N- to C-terminus: Caspase-3 (277 aa).

N-acetylmethionine is present on Met1. 2 consecutive propeptides follow at residues 1 to 9 (MENNKTSVD) and 10 to 28 (SKSI…KSVD). The residue at position 11 (Lys11) is an N6-acetyllysine. At Ser26 the chain carries Phosphoserine. Catalysis depends on residues His121 and Cys163. Cys163 is subject to S-nitrosocysteine; in inhibited form.

This sequence belongs to the peptidase C14A family. In terms of assembly, heterotetramer that consists of two anti-parallel arranged heterodimers, each one formed by a 17 kDa (p17) and a 12 kDa (p12) subunit. Interacts with BIRC6/bruce. In terms of processing, cleavage by granzyme B, caspase-6, caspase-8 and caspase-10 generates the two active subunits. Additional processing of the propeptides is likely due to the autocatalytic activity of the activated protease. Active heterodimers between the small subunit of caspase-7 protease and the large subunit of caspase-3 also occur and vice versa. Post-translationally, S-nitrosylated on its catalytic site cysteine in unstimulated cell lines and denitrosylated upon activation of the Fas apoptotic pathway, associated with an increase in intracellular caspase activity. Fas therefore activates caspase-3 not only by inducing the cleavage of the caspase zymogen to its active subunits, but also by stimulating the denitrosylation of its active site thiol. Ubiquitinated by BIRC6; this activity is inhibited by DIABLO/SMAC. As to expression, highest expression in spleen, lung, liver, kidney and heart. Lower expression in brain, skeletal muscle and testis.

It localises to the cytoplasm. It carries out the reaction Strict requirement for an Asp residue at positions P1 and P4. It has a preferred cleavage sequence of Asp-Xaa-Xaa-Asp-|- with a hydrophobic amino-acid residue at P2 and a hydrophilic amino-acid residue at P3, although Val or Ala are also accepted at this position.. Its activity is regulated as follows. Inhibited by BIRC6; following inhibition of BIRC6-caspase binding by DIABLO/SMAC, BIRC6 is subjected to caspase cleavage, leading to an increase in active caspases. Thiol protease that acts as a major effector caspase involved in the execution phase of apoptosis. Following cleavage and activation by initiator caspases (CASP8, CASP9 and/or CASP10), mediates execution of apoptosis by catalyzing cleavage of many proteins. At the onset of apoptosis, it proteolytically cleaves poly(ADP-ribose) polymerase PARP1 at a '216-Asp-|-Gly-217' bond. Cleaves and activates sterol regulatory element binding proteins (SREBPs) between the basic helix-loop-helix leucine zipper domain and the membrane attachment domain. Cleaves and activates caspase-6, -7 and -9 (CASP6, CASP7 and CASP9, respectively). Cleaves and inactivates interleukin-18 (IL18). Triggers cell adhesion in sympathetic neurons through RET cleavage. Cleaves IL-1 beta between an Asp and an Ala, releasing the mature cytokine which is involved in a variety of inflammatory processes. Cleaves and inhibits serine/threonine-protein kinase AKT1 in response to oxidative stress. Acts as an inhibitor of type I interferon production during virus-induced apoptosis by mediating cleavage of antiviral proteins CGAS, IRF3 and MAVS, thereby preventing cytokine overproduction. Also involved in pyroptosis by mediating cleavage and activation of gasdermin-E (GSDME). Cleaves XRCC4 and phospholipid scramblase proteins XKR4, XKR8 and XKR9, leading to promote phosphatidylserine exposure on apoptotic cell surface. Cleaves BIRC6 following inhibition of BIRC6-caspase binding by DIABLO/SMAC. This is Caspase-3 (Casp3) from Mus musculus (Mouse).